We begin with the raw amino-acid sequence, 76 residues long: Omega-conotoxin-like TeAr94 (76 aa).

A signal peptide spans 1-22; that stretch reads MKLTCMMIVAVLFLTAWTFVTA. The propeptide occupies 23-50; that stretch reads VPHSSNALENLYLKAHHEMNNPEDSELN. 3 disulfides stabilise this stretch: Cys-53–Cys-67, Cys-60–Cys-71, and Cys-66–Cys-75.

It belongs to the conotoxin O1 superfamily. Expressed by the venom duct.

The protein localises to the secreted. In terms of biological role, omega-conotoxins act at presynaptic membranes, they bind and block voltage-gated calcium channels. This chain is Omega-conotoxin-like TeAr94, found in Conus textile (Cloth-of-gold cone).